Consider the following 444-residue polypeptide: Trigger factor (444 aa).

The PPIase FKBP-type domain occupies 166–251; that stretch reads GDQIVIDFKG…VKAVKAPKAA (86 aa).

It belongs to the FKBP-type PPIase family. Tig subfamily.

The protein resides in the cytoplasm. The enzyme catalyses [protein]-peptidylproline (omega=180) = [protein]-peptidylproline (omega=0). Its function is as follows. Involved in protein export. Acts as a chaperone by maintaining the newly synthesized protein in an open conformation. Functions as a peptidyl-prolyl cis-trans isomerase. The polypeptide is Trigger factor (Paracoccus denitrificans (strain Pd 1222)).